Here is a 410-residue protein sequence, read N- to C-terminus: Neuroserpin (410 aa).

Residues 1 to 16 (MAFLGLFSLLVLQSMA) form the signal peptide. Residues N157, N321, and N401 are each glycosylated (N-linked (GlcNAc...) asparagine). O-linked (Xyl...) (chondroitin sulfate) serine glycosylation occurs at S403.

Belongs to the serpin family. As to quaternary structure, monomer. Has a tendency to form large polymers already at 41 and 45 degrees Celsius (in vitro). In terms of tissue distribution, detected in brain cortex and hippocampus pyramidal neurons (at protein level). Detected in cerebrospinal fluid (at protein level). Predominantly expressed in the brain.

Its subcellular location is the secreted. The protein resides in the cytoplasmic vesicle. It is found in the secretory vesicle lumen. The protein localises to the perikaryon. Its function is as follows. Serine protease inhibitor that inhibits plasminogen activators and plasmin but not thrombin. May be involved in the formation or reorganization of synaptic connections as well as for synaptic plasticity in the adult nervous system. May protect neurons from cell damage by tissue-type plasminogen activator. This Homo sapiens (Human) protein is Neuroserpin (SERPINI1).